A 360-amino-acid polypeptide reads, in one-letter code: Cytokine receptor-like factor 2 (360 aa).

An N-terminal signal peptide occupies residues 1-18 (MRAVTWAIVAMLLPRVLG). Residues 27-238 (TGGVGDTLSV…PRTPGTPTPP (212 aa)) lie on the Extracellular side of the membrane. Asn62 carries an N-linked (GlcNAc...) asparagine glycan. A disulfide bridge links Cys77 with Cys90. Residues 123–214 (RPRPPWNVTL…PSKWTGVASL (92 aa)) enclose the Fibronectin type-III domain. Asn129 and Asn174 each carry an N-linked (GlcNAc...) asparagine glycan. A disulfide bridge links Cys185 with Cys223. Residues 205–209 (PSKWT) carry the WSXWS motif motif. A helical membrane pass occupies residues 239-259 (LALACGLAVALLTLVLLLALL). Topologically, residues 260–360 (RMRRVKEALL…LMGDSGYTTL (101 aa)) are cytoplasmic. A Box 1 motif motif is present at residues 268 to 276 (LLPGVPDPR).

Belongs to the type I cytokine receptor family. Type 5 subfamily. As to quaternary structure, heterodimer of CRLF2 and IL7R. In terms of tissue distribution, expressed in all tissues examined including brain, thymus, lung, heart, muscle, stomach, small intestine, liver, kidney, spleen, testis and skin. Highest levels in thymus, liver and testis.

It is found in the membrane. Its function is as follows. Receptor for thymic stromal lymphopoietin (TSLP). Forms a functional complex with TSLP and IL7R which is capable of stimulating cell proliferation through activation of STAT3 and STAT5. Also activates JAK2. Implicated in the development of the hematopoietic system. The sequence is that of Cytokine receptor-like factor 2 (Crlf2) from Rattus norvegicus (Rat).